The sequence spans 607 residues: Aspartate--tRNA(Asp/Asn) ligase (607 aa).

Glutamate 173 is a binding site for L-aspartate. Residues 197 to 200 (QLFK) are aspartate. Position 219 (arginine 219) interacts with L-aspartate. Residues 219-221 (RDE) and glutamine 228 each bind ATP. Histidine 456 lines the L-aspartate pocket. Glutamate 498 provides a ligand contact to ATP. Residue arginine 505 coordinates L-aspartate. Residue 550 to 553 (GLDR) participates in ATP binding.

It belongs to the class-II aminoacyl-tRNA synthetase family. Type 1 subfamily. In terms of assembly, homodimer.

It is found in the cytoplasm. It carries out the reaction tRNA(Asx) + L-aspartate + ATP = L-aspartyl-tRNA(Asx) + AMP + diphosphate. Functionally, aspartyl-tRNA synthetase with relaxed tRNA specificity since it is able to aspartylate not only its cognate tRNA(Asp) but also tRNA(Asn). Reaction proceeds in two steps: L-aspartate is first activated by ATP to form Asp-AMP and then transferred to the acceptor end of tRNA(Asp/Asn). This chain is Aspartate--tRNA(Asp/Asn) ligase, found in Magnetococcus marinus (strain ATCC BAA-1437 / JCM 17883 / MC-1).